The primary structure comprises 305 residues: Putative lipid kinase SAS0691 (305 aa).

The DAGKc domain occupies 3–139 (NKYTHGVLFY…YDVIKINNQY (137 aa)). ATP is bound by residues serine 44, 74-80 (GDGTVNE), and threonine 101. The Mg(2+) site is built by serine 220, aspartate 223, and glutamate 225. The Proton acceptor role is filled by glutamate 281.

The protein belongs to the diacylglycerol/lipid kinase family. It depends on Mg(2+) as a cofactor.

May catalyze the ATP-dependent phosphorylation of lipids other than diacylglycerol (DAG). This Staphylococcus aureus (strain MSSA476) protein is Putative lipid kinase SAS0691.